We begin with the raw amino-acid sequence, 401 residues long: S-adenosylmethionine synthase (401 aa).

137–142 (GQGSGD) serves as a coordination point for ATP.

The protein belongs to the AdoMet synthase 2 family. The cofactor is Mg(2+).

The enzyme catalyses L-methionine + ATP + H2O = S-adenosyl-L-methionine + phosphate + diphosphate. Its pathway is amino-acid biosynthesis; S-adenosyl-L-methionine biosynthesis; S-adenosyl-L-methionine from L-methionine: step 1/1. In terms of biological role, catalyzes the formation of S-adenosylmethionine from methionine and ATP. This is S-adenosylmethionine synthase from Haloquadratum walsbyi (strain DSM 16790 / HBSQ001).